A 463-amino-acid polypeptide reads, in one-letter code: Fumarate hydratase class II (463 aa).

Residues 95–97 (SGT), 126–129 (HPND), 136–138 (SSN), and T184 each bind substrate. H185 (proton donor/acceptor) is an active-site residue. The active site involves S315. Residues S316 and 321–323 (KIN) contribute to the substrate site.

The protein belongs to the class-II fumarase/aspartase family. Fumarase subfamily. Homotetramer.

Its subcellular location is the cytoplasm. The enzyme catalyses (S)-malate = fumarate + H2O. Its pathway is carbohydrate metabolism; tricarboxylic acid cycle; (S)-malate from fumarate: step 1/1. Its function is as follows. Involved in the TCA cycle. Catalyzes the stereospecific interconversion of fumarate to L-malate. The sequence is that of Fumarate hydratase class II from Chlamydia trachomatis serovar D (strain ATCC VR-885 / DSM 19411 / UW-3/Cx).